The primary structure comprises 94 residues: Integration host factor subunit beta (94 aa).

This sequence belongs to the bacterial histone-like protein family. As to quaternary structure, heterodimer of an alpha and a beta chain.

Its function is as follows. This protein is one of the two subunits of integration host factor, a specific DNA-binding protein that functions in genetic recombination as well as in transcriptional and translational control. This chain is Integration host factor subunit beta, found in Roseobacter denitrificans (strain ATCC 33942 / OCh 114) (Erythrobacter sp. (strain OCh 114)).